The primary structure comprises 396 residues: 1-deoxy-D-xylulose 5-phosphate reductoisomerase (396 aa).

Residues threonine 10, glycine 11, serine 12, isoleucine 13, and asparagine 123 each contribute to the NADPH site. Residue lysine 124 participates in 1-deoxy-D-xylulose 5-phosphate binding. Glutamate 125 serves as a coordination point for NADPH. Aspartate 149 is a Mn(2+) binding site. 1-deoxy-D-xylulose 5-phosphate contacts are provided by serine 150, glutamate 151, serine 185, and histidine 208. Glutamate 151 contacts Mn(2+). Glycine 214 lines the NADPH pocket. Serine 221, asparagine 226, lysine 227, and glutamate 230 together coordinate 1-deoxy-D-xylulose 5-phosphate. Glutamate 230 lines the Mn(2+) pocket.

This sequence belongs to the DXR family. It depends on Mg(2+) as a cofactor. Mn(2+) serves as cofactor.

It catalyses the reaction 2-C-methyl-D-erythritol 4-phosphate + NADP(+) = 1-deoxy-D-xylulose 5-phosphate + NADPH + H(+). It participates in isoprenoid biosynthesis; isopentenyl diphosphate biosynthesis via DXP pathway; isopentenyl diphosphate from 1-deoxy-D-xylulose 5-phosphate: step 1/6. In terms of biological role, catalyzes the NADPH-dependent rearrangement and reduction of 1-deoxy-D-xylulose-5-phosphate (DXP) to 2-C-methyl-D-erythritol 4-phosphate (MEP). The chain is 1-deoxy-D-xylulose 5-phosphate reductoisomerase from Shewanella sp. (strain MR-4).